The chain runs to 908 residues: Chloride channel protein 2 (908 aa).

At 1-95 (MAAATAAAAA…RCHKFLVSRV (95 aa)) the chain is on the cytoplasmic side. The essential for channel gating by both voltage and cell volume stretch occupies residues 24–42 (QYEQTLMYGRYTQELGAFA). Thr-28 is modified (phosphothreonine). Residues 44–57 (EEAARIRLGGPEPW) form a modulates channel gating by both voltage and cell volume region. A run of 2 helical transmembrane segments spans residues 96–129 (GEDWIFLVLLGLLMALVSWAMDYAIAVCLQAQQW) and 138–163 (ILLQYLAWVTYPVVLITFSAGFTQIL). The Selectivity filter part_1 signature appears at 169–173 (GSGIP). Ser-170 contributes to the chloride binding site. An intramembrane region (helical) is located at residues 172 to 179 (IPEMKTIL). The next 2 membrane-spanning stretches (helical) occupy residues 188–206 (LTLKTFVAKVIGLTCALGS) and 213–231 (EGPFVHIASMCAALLSKFL). The short motif at 211–215 (GKEGP) is the Selectivity filter part_2 element. Intramembrane regions (helical) lie at residues 247–259 (MLAAACAVGVGCC) and 263–271 (PIGGVLFSI). The next 5 membrane-spanning stretches (helical) occupy residues 283–303 (YWRGFFAATFSAFIFRVLAVW), 329–357 (LPAFAVIGIASGFGGALFVYLNRKIVQVM), 366–385 (FLMRKRLLFPALVTLLISTL), 437–457 (ANVFLTLVIFILMKFWMSALA), and 465–488 (GAFMPVFVIGAAFGRLVGESMAAW). Residues 465–469 (GAFMP) carry the Selectivity filter part_3 motif. Phe-467 is a chloride binding site. Residues 505–519 (GGYAVVGAAALAGAV) constitute an intramembrane region (helical). An intramembrane region (note=Loop between two helices) is located at residues 520–521 (TH). Residues 522 to 533 (TVSTAVIVFELT) constitute an intramembrane region (helical). The note=Loop between two helices intramembrane region spans 534–538 (GQIAH). The chain crosses the membrane as a helical span at residues 539–556 (ILPVMIAVILANAVAQSL). Over 557 to 908 (QPSLYDSIIR…TPSDSDDKCQ (352 aa)) the chain is Cytoplasmic. Residue Tyr-561 coordinates chloride. Residues 592-650 (MVRDVPHVALSCTFRDLRLALHRTKGRMLALVESPESMILLGSIERSQVVALLGAQLSP) enclose the CBS 1 domain. The span at 653–662 (RRQHMQKLRK) shows a compositional bias: basic residues. A disordered region spans residues 653–722 (RRQHMQKLRK…NSTSLQEGTT (70 aa)). Low complexity predominate over residues 666–680 (SPPSDQESPPSSETS). Positions 681–690 (IRFQVNTEDS) are enriched in polar residues. Residues 698 to 707 (QTHKPLKPAL) show a composition bias toward basic residues. Residues 711 to 722 (PSNSTSLQEGTT) are compositionally biased toward polar residues. The residue at position 768 (Ser-768) is a Phosphoserine. A CBS 2 domain is found at 800–860 (IDPAPFQLVE…GSVTAQGVKV (61 aa)). The Basolateral membrane sorting signature appears at 822–823 (LL). The interval 866–908 (SFRDSATSSSDTETTEVHALWGPRSRHGLPREGTPSDSDDKCQ) is disordered.

This sequence belongs to the chloride channel (TC 2.A.49) family. ClC-2/CLCN2 subfamily. As to quaternary structure, homodimer. Interacts with auxiliary subunit HEPACAM. In terms of processing, phosphorylated. Activated by dephosphorylation. Expressed in the adrenal gland and brain. Expressed in intestinal epithelium (at protein level). Expressed in salivary gland (at protein level).

The protein localises to the cell membrane. It is found in the myelin membrane. The protein resides in the basolateral cell membrane. Its subcellular location is the cell projection. It localises to the dendritic spine membrane. The protein localises to the axon. The enzyme catalyses chloride(in) = chloride(out). The catalysed reaction is thiocyanate(in) = thiocyanate(out). It carries out the reaction bromide(in) = bromide(out). It catalyses the reaction nitrate(in) = nitrate(out). The enzyme catalyses iodide(out) = iodide(in). Its activity is regulated as follows. Common gate kinetics are down-regulated by intracellular ATP. Inhibited by AK-42, a derivative of meclofenamate. Inhibited by Cd(2+). Inhibited by Zn(2+) and PKC activation. Inhibited at acidic pH. CCLN2:HEPACAM channel conductance is up-regulated upon hypo-osmolarity. Its function is as follows. Voltage-gated and osmosensitive chloride channel. Forms a homodimeric channel where each subunit has its own ion conduction pathway. Conducts double-barreled currents controlled by two types of gates, two fast glutamate gates that control each subunit independently and a slow common gate that opens and shuts off both subunits simultaneously. Displays inward rectification currents activated upon membrane hyperpolarization and extracellular hypotonicity. Contributes to chloride conductance involved in neuron excitability. In hippocampal neurons, generates a significant part of resting membrane conductance and provides an additional chloride efflux pathway to prevent chloride accumulation in dendrites upon GABA receptor activation. In glia, associates with the auxiliary subunit HEPACAM/GlialCAM at astrocytic processes and myelinated fiber tracts where it may regulate transcellular chloride flux buffering extracellular chloride and potassium concentrations. Regulates aldosterone production in adrenal glands. The opening of CLCN2 channels at hyperpolarized membrane potentials in the glomerulosa causes cell membrane depolarization, activation of voltage-gated calcium channels and increased expression of aldosterone synthase, the rate-limiting enzyme for aldosterone biosynthesis. Contributes to chloride conductance in retinal pigment epithelium involved in phagocytosis of shed photoreceptor outer segments and photoreceptor renewal. Conducts chloride currents at the basolateral membrane of epithelial cells with a role in chloride reabsorption rather than secretion. Permeable to small monovalent anions with chloride &gt; thiocyanate &gt; bromide &gt; nitrate &gt; iodide ion selectivity. This is Chloride channel protein 2 (Clcn2) from Mus musculus (Mouse).